The sequence spans 687 residues: Solute carrier organic anion transporter family member 1B2 (687 aa).

Topologically, residues 1–28 are cytoplasmic; it reads MDHTQQSRKAAEAQPSRSKQTRFCDGFK. Residues 29 to 48 form a helical membrane-spanning segment; the sequence is LFLAALSFSYICKALGGVVM. The Extracellular portion of the chain corresponds to 49 to 67; it reads KSSITQIERRFDIPSSISG. Residues 68-88 traverse the membrane as a helical segment; that stretch reads LIDGGFEIGNLLVIVFVSYFG. Over 89–94 the chain is Cytoplasmic; sequence SKLHRP. Residues 95-119 form a helical membrane-spanning segment; the sequence is KLIGIGCFIMGIGSILTALPHFFMG. At 120–165 the chain is on the extracellular side; sequence YYKYAKENDIGSLGNSTLTCFINQMTSPTGPSPEIVEKGCEKGLKS. Asn134 carries an N-linked (GlcNAc...) asparagine glycan. A helical transmembrane segment spans residues 166–194; that stretch reads HMWIYVLMGNMLRGIGETPIVPLGISYLD. The Cytoplasmic segment spans residues 195 to 213; the sequence is DFAKEGHTSMHLGTLHTIA. Residues 214 to 234 form a helical membrane-spanning segment; that stretch reads MIGPILGFIMSSVFAKIYVDV. The Extracellular portion of the chain corresponds to 235 to 252; sequence GYVDLNSVRITPNDARWV. Residues 253–277 form a helical membrane-spanning segment; sequence GAWWLSFIVNGLLCITSSIPFFFLP. At 278-328 the chain is on the cytoplasmic side; the sequence is KIPKRSQEERKNSVSLHAPKTDEEKKHMTNLTKQEEQDPSNMTGFLRSLRS. The segment at 286–311 is disordered; sequence ERKNSVSLHAPKTDEEKKHMTNLTKQ. Residues Ser290 and Ser292 each carry the phosphoserine modification. Residues 329 to 350 traverse the membrane as a helical segment; it reads ILTNEIYVIFLILTLLQVSGFI. Over 351–370 the chain is Extracellular; that stretch reads GSFTYLFKFIEQQFGRTASQ. A helical transmembrane segment spans residues 371-394; it reads ANFLLGIITIPTMATAMFLGGYIV. At 395 to 398 the chain is on the cytoplasmic side; that stretch reads KKFK. The helical transmembrane segment at 399 to 422 threads the bilayer; sequence LTSVGIAKFVFFTSSVAYAFQFLY. Over 423-531 the chain is Extracellular; that stretch reads FPLLCENKPF…YKCKTNYYFY (109 aa). The Kazal-like domain maps to 450–507; it reads DVPLSYCNSDCSCDKNQWEPICGENGVTYISPCLAGCKSFRGDKKPNNTEFYDCSCIS. 3 disulfide bridges follow: Cys456–Cys486, Cys462–Cys482, and Cys471–Cys505. N-linked (GlcNAc...) asparagine glycans are attached at residues Asn496 and Asn511. Residues 532–554 traverse the membrane as a helical segment; the sequence is IILQVTVSFFTAMGSPSLILILM. At 555–563 the chain is on the cytoplasmic side; that stretch reads KSVQPELKS. Residues 564 to 589 form a helical membrane-spanning segment; the sequence is LAMGFHSLIIRALGGILAPIYYGAFI. Residues 590 to 623 are Extracellular-facing; it reads DRTCIKWSVTSCGKRGACRLYNSRLFGFSYLGLN. A helical membrane pass occupies residues 624–641; the sequence is LALKTPPLFLYVVLIYFT. Over 642–687 the chain is Cytoplasmic; sequence KRKYKRNDNKTLENGRQFTDEGNPDSVNKNGYYCVPYDEQSNETPL. A Phosphothreonine modification is found at Thr660. Ser667 is subject to Phosphoserine.

The protein belongs to the organo anion transporter (TC 2.A.60) family. In terms of tissue distribution, liver specific. Expression is highest in central perivenous hepatocytes and lowest in the periportal region. Isoform 1 predominates. Not detected in heart, brain, kidney, skeletal muscle, lung, testis or spleen.

Its subcellular location is the basolateral cell membrane. It catalyses the reaction estrone 3-sulfate(out) = estrone 3-sulfate(in). It carries out the reaction taurocholate(out) = taurocholate(in). The catalysed reaction is prostaglandin E2(out) = prostaglandin E2(in). The enzyme catalyses L-thyroxine(out) = L-thyroxine(in). Mediates the Na(+)-independent uptake of organic anions such as taurochlate, bromosulfophthalein and steroid conjugates (estrone 3-sulfate, 17-beta-glucuronosyl estradiol, dehydroepiandrosterone sulfate). Also transports prostaglandin E2 and L-thyroxine (T4). Shows a pH-sensitive substrate specificity which may be ascribed to the protonation state of the binding site and leads to a stimulation of substrate transport in an acidic microenvironment. Hydrogencarbonate/HCO3(-) acts as the probable counteranion that exchanges for organic anions. This Rattus norvegicus (Rat) protein is Solute carrier organic anion transporter family member 1B2 (Slco1b2).